A 514-amino-acid chain; its full sequence is Activin receptor type-2A (514 aa).

The signal sequence occupies residues Met1–Gly20. The Extracellular portion of the chain corresponds to Ser21–Pro136. 5 disulfides stabilise this stretch: Cys31-Cys61, Cys51-Cys79, Cys86-Cys105, Cys92-Cys104, and Cys106-Cys111. N-linked (GlcNAc...) asparagine glycans are attached at residues Asn46, Asn67, and Asn88. A helical transmembrane segment spans residues Leu137–Tyr162. Residues Arg163–Leu514 are Cytoplasmic-facing. The region spanning Leu193 to Leu486 is the Protein kinase domain. ATP is bound by residues Lys199–Val207 and Lys220. Asp323 acts as the Proton acceptor in catalysis.

It belongs to the protein kinase superfamily. TKL Ser/Thr protein kinase family. TGFB receptor subfamily.

Its subcellular location is the cell membrane. It catalyses the reaction L-threonyl-[receptor-protein] + ATP = O-phospho-L-threonyl-[receptor-protein] + ADP + H(+). The catalysed reaction is L-seryl-[receptor-protein] + ATP = O-phospho-L-seryl-[receptor-protein] + ADP + H(+). Functionally, receptor for activin A, activin B and inhibin A. Involved in transmembrane signaling. In Xenopus laevis (African clawed frog), this protein is Activin receptor type-2A (acvr2a).